The chain runs to 293 residues: MLDSIKIKLQYLLPKQGLTQLAGWGANKQGGWLTQLVIKAFARYYKVDMKEAQDPEFSAYRTFNEFFVRPLRAGVRPVVAEENLLAQPADGAISQLGAIREGQILQAKGHNYSLEALLAGNYLLAAEFQNGQFVTTYLAPRDYHRVHMPCDGVLREMIYVPGDLFSVNPLTAANVPNLFARNERVICIFDTAFGPMAQILVGATIVGSIETVWAGTITPPREGVIRRWTYPQAGCEGAITLEKGQEMGRFKLGSTVINLFAEGKVYFAPQLNSGAVTRMGEVLAEAVPTTPSY.

Active-site charge relay system; for autoendoproteolytic cleavage activity residues include aspartate 90, histidine 147, and serine 254. The active-site Schiff-base intermediate with substrate; via pyruvic acid; for decarboxylase activity is serine 254. Serine 254 carries the pyruvic acid (Ser); by autocatalysis modification.

Belongs to the phosphatidylserine decarboxylase family. PSD-B subfamily. Prokaryotic type I sub-subfamily. As to quaternary structure, heterodimer of a large membrane-associated beta subunit and a small pyruvoyl-containing alpha subunit. Pyruvate is required as a cofactor. Is synthesized initially as an inactive proenzyme. Formation of the active enzyme involves a self-maturation process in which the active site pyruvoyl group is generated from an internal serine residue via an autocatalytic post-translational modification. Two non-identical subunits are generated from the proenzyme in this reaction, and the pyruvate is formed at the N-terminus of the alpha chain, which is derived from the carboxyl end of the proenzyme. The autoendoproteolytic cleavage occurs by a canonical serine protease mechanism, in which the side chain hydroxyl group of the serine supplies its oxygen atom to form the C-terminus of the beta chain, while the remainder of the serine residue undergoes an oxidative deamination to produce ammonia and the pyruvoyl prosthetic group on the alpha chain. During this reaction, the Ser that is part of the protease active site of the proenzyme becomes the pyruvoyl prosthetic group, which constitutes an essential element of the active site of the mature decarboxylase.

Its subcellular location is the cell membrane. It carries out the reaction a 1,2-diacyl-sn-glycero-3-phospho-L-serine + H(+) = a 1,2-diacyl-sn-glycero-3-phosphoethanolamine + CO2. The protein operates within phospholipid metabolism; phosphatidylethanolamine biosynthesis; phosphatidylethanolamine from CDP-diacylglycerol: step 2/2. In terms of biological role, catalyzes the formation of phosphatidylethanolamine (PtdEtn) from phosphatidylserine (PtdSer). The sequence is that of Phosphatidylserine decarboxylase proenzyme from Yersinia pseudotuberculosis serotype O:1b (strain IP 31758).